The chain runs to 295 residues: Mycothiol acetyltransferase (295 aa).

N-acetyltransferase domains are found at residues T4 to T138 and V149 to N295. D36 lines the 1D-myo-inositol 2-(L-cysteinylamino)-2-deoxy-alpha-D-glucopyranoside pocket. Acetyl-CoA-binding positions include L77–V79 and R85–A90. 1D-myo-inositol 2-(L-cysteinylamino)-2-deoxy-alpha-D-glucopyranoside contacts are provided by E176, K217, and E225. Acetyl-CoA-binding positions include V229–V231 and Q236–Y242. Y266 serves as a coordination point for 1D-myo-inositol 2-(L-cysteinylamino)-2-deoxy-alpha-D-glucopyranoside. N271–N276 is a binding site for acetyl-CoA.

Belongs to the acetyltransferase family. MshD subfamily. As to quaternary structure, monomer.

The catalysed reaction is 1D-myo-inositol 2-(L-cysteinylamino)-2-deoxy-alpha-D-glucopyranoside + acetyl-CoA = mycothiol + CoA + H(+). Its function is as follows. Catalyzes the transfer of acetyl from acetyl-CoA to desacetylmycothiol (Cys-GlcN-Ins) to form mycothiol. The protein is Mycothiol acetyltransferase (mshD) of Mycolicibacterium smegmatis (strain ATCC 700084 / mc(2)155) (Mycobacterium smegmatis).